The chain runs to 209 residues: MEGGGGSSNKSTGGLAGFFGAGGAGYSNADLAGVPLTGMNPLSPYLNVDPRYLVQDTDEFILPTGANKTRGRFELAFFTIGGCCMTGAAFGALNGLRLGLKETQSMPWSKPRNVQILNMVTRQGALWANTLGSLALLYSAFGVIIEKTRGAEDDFNTVAAGTMTGMLYKCTGGLRGIARGGLAGLTLTSVYALYNNWEHMKGSLLQQSL.

The next 3 helical transmembrane spans lie at 73 to 93 (FELAFFTIGGCCMTGAAFGAL), 125 to 145 (ALWANTLGSLALLYSAFGVII), and 181 to 197 (GLAGLTLTSVYALYNNW).

The protein belongs to the Tim17/Tim22/Tim23 family. Component of the TIM23 complex at least composed of TIMM23, TIMM17 (TIMM17A or TIMM17B) and TIMM50; within this complex, directly interacts with TIMM50. The complex interacts with the TIMM44 component of the PAM complex and with DNAJC15. Upon mitochondrial depolarization, interacts with PINK1; the interaction is required for PINK1 accumulation at the outer mitochondrial membrane, kinase activation by autophosphorylation and PRKN recruitement to mitochondria.

Its subcellular location is the mitochondrion inner membrane. In terms of biological role, essential component of the TIM23 complex, a complex that mediates the translocation of transit peptide-containing proteins across the mitochondrial inner membrane. Has a role in the activation of stress-induced mitophagy by protecting PINK1 from OMA1-mediated degradation and facilitating its accumulation at the outer mitochondrial membrane in response to depolarization. This is Mitochondrial import inner membrane translocase subunit Tim23 (Timm23) from Rattus norvegicus (Rat).